The sequence spans 218 residues: Phosphoenolpyruvate guanylyltransferase (218 aa).

Positions 151, 166, and 169 each coordinate phosphoenolpyruvate.

The protein belongs to the CofC family.

The enzyme catalyses phosphoenolpyruvate + GTP + H(+) = enolpyruvoyl-2-diphospho-5'-guanosine + diphosphate. It functions in the pathway cofactor biosynthesis; coenzyme F420 biosynthesis. Guanylyltransferase that catalyzes the activation of phosphoenolpyruvate (PEP) as enolpyruvoyl-2-diphospho-5'-guanosine, via the condensation of PEP with GTP. It is involved in the biosynthesis of coenzyme F420, a hydride carrier cofactor. This chain is Phosphoenolpyruvate guanylyltransferase, found in Mycobacterium sp. (strain KMS).